We begin with the raw amino-acid sequence, 534 residues long: CTP synthase (534 aa).

The interval 1–265 (MKYIIVTGGV…TTQLMKHLQL (265 aa)) is amidoligase domain. Residue Ser12 participates in CTP binding. UTP is bound at residue Ser12. 13 to 18 (GLGKGI) serves as a coordination point for ATP. Tyr53 is a binding site for L-glutamine. Asp70 provides a ligand contact to ATP. Residues Asp70 and Glu140 each contribute to the Mg(2+) site. Residues 147-149 (DIE), 186-191 (KTKPSQ), and Lys222 contribute to the CTP site. Residues 186–191 (KTKPSQ) and Lys222 contribute to the UTP site. Residues 289–530 (KLAIVGKYTN…VAAMCKYRKE (242 aa)) enclose the Glutamine amidotransferase type-1 domain. L-glutamine is bound at residue Gly352. The active-site Nucleophile; for glutamine hydrolysis is the Cys379. L-glutamine is bound by residues 380–383 (LGMQ), Glu403, and Arg460. Catalysis depends on residues His503 and Glu505.

This sequence belongs to the CTP synthase family. In terms of assembly, homotetramer.

The catalysed reaction is UTP + L-glutamine + ATP + H2O = CTP + L-glutamate + ADP + phosphate + 2 H(+). The enzyme catalyses L-glutamine + H2O = L-glutamate + NH4(+). It catalyses the reaction UTP + NH4(+) + ATP = CTP + ADP + phosphate + 2 H(+). It functions in the pathway pyrimidine metabolism; CTP biosynthesis via de novo pathway; CTP from UDP: step 2/2. Its activity is regulated as follows. Allosterically activated by GTP, when glutamine is the substrate; GTP has no effect on the reaction when ammonia is the substrate. The allosteric effector GTP functions by stabilizing the protein conformation that binds the tetrahedral intermediate(s) formed during glutamine hydrolysis. Inhibited by the product CTP, via allosteric rather than competitive inhibition. Its function is as follows. Catalyzes the ATP-dependent amination of UTP to CTP with either L-glutamine or ammonia as the source of nitrogen. Regulates intracellular CTP levels through interactions with the four ribonucleotide triphosphates. The protein is CTP synthase of Methanosarcina barkeri (strain Fusaro / DSM 804).